Reading from the N-terminus, the 366-residue chain is ATPase ASNA1 homolog (366 aa).

An ATP-binding site is contributed by 33–40; that stretch reads KGGVGKTT. The active site involves Asp62. The ATP site is built by Glu234 and Asn261.

This sequence belongs to the arsA ATPase family. In terms of assembly, homodimer.

The protein resides in the cytoplasm. It is found in the endoplasmic reticulum. ATPase required for the post-translational delivery of tail-anchored (TA) proteins to the endoplasmic reticulum. Recognizes and selectively binds the transmembrane domain of TA proteins in the cytosol. This complex then targets to the endoplasmic reticulum by membrane-bound receptors, where the tail-anchored protein is released for insertion. This process is regulated by ATP binding and hydrolysis. ATP binding drives the homodimer towards the closed dimer state, facilitating recognition of newly synthesized TA membrane proteins. ATP hydrolysis is required for insertion. Subsequently, the homodimer reverts towards the open dimer state, lowering its affinity for the membrane-bound receptor, and returning it to the cytosol to initiate a new round of targeting. This chain is ATPase ASNA1 homolog, found in Cryptosporidium parvum (strain Iowa II).